The following is a 391-amino-acid chain: Autophagy-related protein 18d (391 aa).

Positions 1 to 24 (MDPRRNFQPGGYDSRNTFTSGSFG) are disordered. WD repeat units lie at residues 31–69 (SDEAELVSVSWNQDYSCFAAGTSHGFRIYNCEPFKETFR), 74–118 (DGGF…CISE), 203–243 (AHDS…RLQE), and 248–287 (VDRADIYSIALSPNVQWLAVSSDKGTVHIFSLRVRVIGED).

This sequence belongs to the WD repeat PROPPIN family. In terms of assembly, component of the PI(3,5)P2 regulatory complex at least composed of ATG18, SAC/FIG4, FAB1 and VAC14. As to expression, expressed in roots, stems, flowers and leaves.

The protein resides in the preautophagosomal structure membrane. The protein localises to the vacuole membrane. The PI(3,5)P2 regulatory complex regulates both the synthesis and turnover of phosphatidylinositol 3,5-bisphosphate (PtdIns(3,5)P2). Required for autophagy. This chain is Autophagy-related protein 18d (ATG18D), found in Arabidopsis thaliana (Mouse-ear cress).